We begin with the raw amino-acid sequence, 429 residues long: MTKIVDIKAFEVLDSRGNPTVMAEVILESGAVGSACAPSGASTGSREALELRDGDKSRYLGKGVLTAVNNINTTIKNLLVGKDALDQRALDKAMIDADGTDNKSVLGANAILAVSLAAAKAAAVAKKVPLYAHIADLNGTPGKYSMPVPMMNIINGGEHADNNVDIQEFMVQPVGAKTFAEALRIGAEIFHNLKKILHDKGLNTAVGDEGGFAPNLPSNEEALKVIIVAVEKAGYKLGEDVTLALDCASSEFYKDGQYDLAGEGKVFSSAEFSDYLADLANKYPIISIEDGKDESDWDGWADLTNKIGNKVQLVGDDLFVTNTRILKEGIEKKIANSILIKFNQIGSLSETLDAIKMAQDAGYTAVISHRSGETEDTTIADLAVATAAGQIKTGSLCRSDRVSKYNRLLRIEAELGAAAPYKGRAEFKS.

Gln167 is a binding site for (2R)-2-phosphoglycerate. Catalysis depends on Glu209, which acts as the Proton donor. Asp246, Glu289, and Asp316 together coordinate Mg(2+). (2R)-2-phosphoglycerate-binding residues include Lys341, Arg370, Ser371, and Lys392. Lys341 acts as the Proton acceptor in catalysis.

The protein belongs to the enolase family. Component of the RNA degradosome, a multiprotein complex involved in RNA processing and mRNA degradation. It depends on Mg(2+) as a cofactor.

The protein resides in the cytoplasm. It localises to the secreted. Its subcellular location is the cell surface. It carries out the reaction (2R)-2-phosphoglycerate = phosphoenolpyruvate + H2O. Its pathway is carbohydrate degradation; glycolysis; pyruvate from D-glyceraldehyde 3-phosphate: step 4/5. In terms of biological role, catalyzes the reversible conversion of 2-phosphoglycerate (2-PG) into phosphoenolpyruvate (PEP). It is essential for the degradation of carbohydrates via glycolysis. This chain is Enolase, found in Cellvibrio japonicus (strain Ueda107) (Pseudomonas fluorescens subsp. cellulosa).